A 225-amino-acid chain; its full sequence is Enolase-phosphatase E1 (225 aa).

Belongs to the HAD-like hydrolase superfamily. MasA/MtnC family. Monomer. Requires Mg(2+) as cofactor.

The catalysed reaction is 5-methylsulfanyl-2,3-dioxopentyl phosphate + H2O = 1,2-dihydroxy-5-(methylsulfanyl)pent-1-en-3-one + phosphate. It functions in the pathway amino-acid biosynthesis; L-methionine biosynthesis via salvage pathway; L-methionine from S-methyl-5-thio-alpha-D-ribose 1-phosphate: step 3/6. It participates in amino-acid biosynthesis; L-methionine biosynthesis via salvage pathway; L-methionine from S-methyl-5-thio-alpha-D-ribose 1-phosphate: step 4/6. Bifunctional enzyme that catalyzes the enolization of 2,3-diketo-5-methylthiopentyl-1-phosphate (DK-MTP-1-P) into the intermediate 2-hydroxy-3-keto-5-methylthiopentenyl-1-phosphate (HK-MTPenyl-1-P), which is then dephosphorylated to form the acireductone 1,2-dihydroxy-3-keto-5-methylthiopentene (DHK-MTPene). The polypeptide is Enolase-phosphatase E1 (Shewanella woodyi (strain ATCC 51908 / MS32)).